Here is a 485-residue protein sequence, read N- to C-terminus: Glutamyl-tRNA(Gln) amidotransferase subunit A (485 aa).

Active-site charge relay system residues include Lys79 and Ser154. Ser178 acts as the Acyl-ester intermediate in catalysis.

This sequence belongs to the amidase family. GatA subfamily. As to quaternary structure, heterotrimer of A, B and C subunits.

It catalyses the reaction L-glutamyl-tRNA(Gln) + L-glutamine + ATP + H2O = L-glutaminyl-tRNA(Gln) + L-glutamate + ADP + phosphate + H(+). Allows the formation of correctly charged Gln-tRNA(Gln) through the transamidation of misacylated Glu-tRNA(Gln) in organisms which lack glutaminyl-tRNA synthetase. The reaction takes place in the presence of glutamine and ATP through an activated gamma-phospho-Glu-tRNA(Gln). The protein is Glutamyl-tRNA(Gln) amidotransferase subunit A of Clostridium botulinum (strain Langeland / NCTC 10281 / Type F).